The chain runs to 22 residues: Mu-conotoxin TIIIA (22 aa).

Cystine bridges form between Cys4/Cys16, Cys5/Cys21, and Cys11/Cys22. Residues Pro8 and Pro18 each carry the 4-hydroxyproline modification. The residue at position 22 (Cys22) is a Cysteine amide.

Belongs to the conotoxin M superfamily. In terms of tissue distribution, expressed by the venom duct.

It is found in the secreted. Its function is as follows. Mu-conotoxins block voltage-gated sodium channels (Nav). This synthetic toxin reversibly and potently blocks rNav1.4/SCN4A (IC(50) is 9 nM) and rNav1.2/SCN2A (IC(50) is 40 nM). It also moderately blocks rNav1.1/SCN1A, rNav1.3/SCN3A, and rNav1.6/SCN8A. The block of SCN1A and SCN2A is modified when beta-subunits are coexpressed with alpha subunits. Hence, blocks of channels containing beta-1 and beta-3 subunits are more potent (compared to channels without beta subunits), whereas blocks of channels containing beta-2 and beta-4 subunits are less potent (compared to channels without beta subunits). The sequence is that of Mu-conotoxin TIIIA from Conus tulipa (Fish-hunting cone snail).